A 205-amino-acid chain; its full sequence is MNWPLALGIWAASYLAGSLPAGYLAGRRLKNIDIREFGSGSTGATNVLRTLGRGPAAAVLLFDVFKGLFAVWLARTLAGGEDAGAWIVLGAGLAAIVGHSWPVWLAFRGGKSVAVSVGLLLGMHWPVALTVAAVWGVCFAVTRIVSFASIVAAAATPLCFYLWRAPLPFTLFGLLGGIYIVWRHRGNIERLLQGTEPKIGDPAAH.

Transmembrane regions (helical) follow at residues 5–25 (LALGIWAASYLAGSLPAGYLA), 54–74 (GPAAAVLLFDVFKGLFAVWLA), 87–107 (IVLGAGLAAIVGHSWPVWLAF), 117–137 (VGLLLGMHWPVALTVAAVWGV), 138–158 (CFAVTRIVSFASIVAAAATPL), and 162–182 (LWRAPLPFTLFGLLGGIYIVW).

Belongs to the PlsY family. In terms of assembly, probably interacts with PlsX.

Its subcellular location is the cell inner membrane. It catalyses the reaction an acyl phosphate + sn-glycerol 3-phosphate = a 1-acyl-sn-glycero-3-phosphate + phosphate. It functions in the pathway lipid metabolism; phospholipid metabolism. Functionally, catalyzes the transfer of an acyl group from acyl-phosphate (acyl-PO(4)) to glycerol-3-phosphate (G3P) to form lysophosphatidic acid (LPA). This enzyme utilizes acyl-phosphate as fatty acyl donor, but not acyl-CoA or acyl-ACP. This is Glycerol-3-phosphate acyltransferase from Gloeobacter violaceus (strain ATCC 29082 / PCC 7421).